Here is a 176-residue protein sequence, read N- to C-terminus: Inorganic pyrophosphatase (176 aa).

Residues K31, R45, and Y57 each coordinate substrate. The Mg(2+) site is built by D67, D72, and D104. Y142 provides a ligand contact to substrate.

It belongs to the PPase family. Homohexamer. It depends on Mg(2+) as a cofactor.

The protein resides in the cytoplasm. It carries out the reaction diphosphate + H2O = 2 phosphate + H(+). Catalyzes the hydrolysis of inorganic pyrophosphate (PPi) forming two phosphate ions. The polypeptide is Inorganic pyrophosphatase (Haemophilus influenzae (strain ATCC 51907 / DSM 11121 / KW20 / Rd)).